A 367-amino-acid polypeptide reads, in one-letter code: Putative C-&gt;U-editing enzyme APOBEC-4 (367 aa).

A CMP/dCMP-type deaminase domain is found at 61–177; the sequence is PQTKHLTFYE…AWNREALRSL (117 aa). H93 serves as a coordination point for Zn(2+). E95 serves as the catalytic Proton donor. 2 residues coordinate Zn(2+): C127 and C134.

It belongs to the cytidine and deoxycytidylate deaminase family. Zn(2+) is required as a cofactor. As to expression, predominantly expressed in testis.

Functionally, putative C to U editing enzyme whose physiological substrate is not yet known. The polypeptide is Putative C-&gt;U-editing enzyme APOBEC-4 (APOBEC4) (Homo sapiens (Human)).